The sequence spans 385 residues: Polyketide synthase 2 (385 aa).

The active site involves C157.

This sequence belongs to the thiolase-like superfamily. Chalcone/stilbene synthases family. Expressed in leaves and glandular trichomes.

Its subcellular location is the cytoplasm. Its function is as follows. Polyketide synthase responsible for the biosynthesis of secondary metabolites. The chain is Polyketide synthase 2 (PKSG2) from Cannabis sativa (Hemp).